The chain runs to 377 residues: Nitric oxide reductase FlRd-NAD(+) reductase (377 aa).

This sequence belongs to the FAD-dependent oxidoreductase family. FAD serves as cofactor.

Its subcellular location is the cytoplasm. It catalyses the reaction 2 reduced [nitric oxide reductase rubredoxin domain] + NAD(+) + H(+) = 2 oxidized [nitric oxide reductase rubredoxin domain] + NADH. The protein operates within nitrogen metabolism; nitric oxide reduction. In terms of biological role, one of at least two accessory proteins for anaerobic nitric oxide (NO) reductase. Reduces the rubredoxin moiety of NO reductase. In Escherichia coli O127:H6 (strain E2348/69 / EPEC), this protein is Nitric oxide reductase FlRd-NAD(+) reductase.